The chain runs to 376 residues: MYG1 exonuclease (376 aa).

The N-terminal 47 residues, 1–47 (MGHRFLRGLLTLLLPPPPLYTRHRMLGPESVPPPKRSRSKLMAPPRI), are a transit peptide targeting the mitochondrion. Phosphoserine is present on Ser-120. N6-acetyllysine occurs at positions 267 and 273.

Belongs to the MYG1 family. In terms of tissue distribution, ubiquitously expressed, with highest levels in testis.

The protein resides in the nucleus. It is found in the nucleoplasm. It localises to the mitochondrion matrix. The protein localises to the nucleolus. 3'-5' RNA exonuclease which cleaves in situ on specific transcripts in both nucleus and mitochondrion. Involved in regulating spatially segregated organellar RNA processing, acts as a coordinator of nucleo-mitochondrial crosstalk. In nucleolus, processes pre-ribosomal RNA involved in ribosome assembly and alters cytoplasmic translation. In mitochondrial matrix, processes 3'-termini of the mito-ribosomal and messenger RNAs and controls translation of mitochondrial proteins. This chain is MYG1 exonuclease, found in Homo sapiens (Human).